A 417-amino-acid chain; its full sequence is MALNVSKVVPNSPILVKSVNASRSRRVLLAYVHHPLAANKGSSIEELKQGLCCTKTVTFVSSRRCSTLCFVGKSQDTETNSQVVQKEGEKQVMPRRKSSNSSQLLVEYVSNDAKFVNERARNDFVLLSRGIMRLDARARQDVAILGSGFLKLDARAREDTEKIDRDVKRKAERLHHIATIFKNIAESKLKNAADKHWSDGALEADLRRADFRAKQRAMEDALMALEFIKNIHDMMVNKMVDSLVTSETGTTDRISLEKNGIALGFFPGEVSSDRISAIEEAYKSMASALSEADGIDYTDPEELELLVTTLIDLDAMDGKSSASLLAECSSSPDVNTRKALANALAAAPSMWTLGNAGMGALQRLAEDSNPAIAAAASRAINALKKQWEVEEGDSLRFMMNFERPNDDDDVDSDLDEI.

A chloroplast-targeting transit peptide spans 1–36; it reads MALNVSKVVPNSPILVKSVNASRSRRVLLAYVHHPL.

This sequence belongs to the ATA15/OSA15 family. As to expression, expressed in leaves. Expressed in 7-day-old seedlings, roots, rosette leaves, cauline leaves and flower buds.

It localises to the plastid. It is found in the chloroplast. Functionally, involved in modulation of redox homeostasis to regulate leaf senescence mediated by age and stress factors during plant development. Its function is dependent of EIN2, a central factor of ethylene signaling. The sequence is that of Senescence-associated protein AAF, chloroplastic from Arabidopsis thaliana (Mouse-ear cress).